The following is a 303-amino-acid chain: uncharacterized protein (303 aa).

4 helical membrane passes run 55-77 (FLVK…LFIQ), 92-111 (PAVF…TKII), 208-230 (FSLP…ATSL), and 240-257 (IPHI…KILI).

It is found in the cell membrane. This is an uncharacterized protein from Bacillus subtilis (strain 168).